The chain runs to 422 residues: Aliphatic (R)-hydroxynitrile lyase (422 aa).

Zn(2+) contacts are provided by cysteine 63, histidine 85, cysteine 115, cysteine 118, cysteine 121, cysteine 129, and cysteine 199.

Belongs to the zinc-containing alcohol dehydrogenase family. In terms of assembly, homodimer. Zn(2+) serves as cofactor.

It catalyses the reaction (2R)-2-hydroxy-2-methylbutanenitrile = butan-2-one + hydrogen cyanide. In terms of biological role, involved in the catabolism of cyanogenic glycosides. Naturally occurring substrates are the aliphatic acetone cyanohydrin and butan-2-one cyanohydrin, which are the aglycones of the cyanogenic glycosides linamarin, lotaustralin, linustatin and neolinustatin. Can use various aliphatic ketones and aldehydes as substrates, but not aromatic ketones. The polypeptide is Aliphatic (R)-hydroxynitrile lyase (Linum usitatissimum (Flax)).